We begin with the raw amino-acid sequence, 386 residues long: Uroporphyrinogen decarboxylase (386 aa).

Residues Arg-44, Ala-46, Arg-48, Arg-57, Asp-93, Tyr-170, Ser-225, and His-364 each contribute to the coproporphyrinogen I site. Coproporphyrinogen III is bound by residues Arg-44, Ala-46, and Arg-48. Positions 93, 170, 225, and 364 each coordinate coproporphyrinogen III.

It belongs to the uroporphyrinogen decarboxylase family. In terms of assembly, homodimer.

The protein resides in the cytoplasm. It localises to the cytosol. It carries out the reaction uroporphyrinogen III + 4 H(+) = coproporphyrinogen III + 4 CO2. It functions in the pathway porphyrin-containing compound metabolism; protoporphyrin-IX biosynthesis; coproporphyrinogen-III from 5-aminolevulinate: step 4/4. Its function is as follows. Catalyzes the decarboxylation of four acetate groups of uroporphyrinogen-III to yield coproporphyrinogen-III. This is Uroporphyrinogen decarboxylase from Drosophila virilis (Fruit fly).